We begin with the raw amino-acid sequence, 277 residues long: Large ribosomal subunit protein uL2c (277 aa).

Disordered stretches follow at residues 24–57 (IVQS…RGGG) and 226–266 (NAAD…HKYS).

It belongs to the universal ribosomal protein uL2 family. Part of the 50S ribosomal subunit.

Its subcellular location is the plastid. The protein localises to the chloroplast. The polypeptide is Large ribosomal subunit protein uL2c (rpl2) (Zygnema circumcarinatum (Green alga)).